Here is a 423-residue protein sequence, read N- to C-terminus: Salicylate 5-hydroxylase, large oxygenase component (423 aa).

Residues 1–20 (MSEPQRLKPVFPQDPKWPGE) form a disordered region. The region spanning 49–168 (WCYVGLEAEI…VAARGGAVFA (120 aa)) is the Rieske domain. Residues C91, H93, C111, and H114 each coordinate [2Fe-2S] cluster. Residues H224, H229, and D370 each coordinate Fe cation.

The protein belongs to the bacterial ring-hydroxylating dioxygenase alpha subunit family. As to quaternary structure, the salicylate 5-hydroxylase (S5H) multicomponent enzyme system is composed of an electron transfer component and an oxygenase component. The electron transfer component is comprised of a ferredoxin reductase (NagAa) and a ferredoxin (NagAb), and the oxygenase component is formed by a large subunit (NagG) and a small subunit (NagH). The cofactor is Fe cation. It depends on [2Fe-2S] cluster as a cofactor.

It carries out the reaction salicylate + NADH + O2 + H(+) = 2,5-dihydroxybenzoate + NAD(+) + H2O. It functions in the pathway aromatic compound metabolism; naphthalene degradation. In terms of biological role, oxygenase component of the salicylate 5-hydroxylase (S5H) multicomponent enzyme system which catalyzes the 5-hydroxylation of salicylate to gentisate. Active only on substrates with a ring-substituted carboxylate group with an adjacent hydroxyl group. Primarily active against salicylate and substituted salicylates, but not against 2-hydroxycinnamate, 3-hydroxycinnamate, 2-hydroxyphenylacetate, 3-hydroxyphenylacetate, 2-hydroxybenzophenone, 1-hydroxy-2-naphthoate, 4-methoxysalicylate or 2-hydroxyacetophenone. This is Salicylate 5-hydroxylase, large oxygenase component from Ralstonia sp.